The following is a 268-amino-acid chain: NAC transcription factor 29 (268 aa).

The NAC domain occupies 9-161 (LPPGFRFHPT…EWVLCRIYKK (153 aa)). The DNA-binding element occupies 106 to 167 (VGVKKALVFY…IYKKRGASKL (62 aa)).

In terms of tissue distribution, expressed in senescing leaves, petals and sepals.

It localises to the nucleus. Its function is as follows. Transcription activator that binds to, and transactivates the promoter of the abscisic aldehyde oxidase AAO3. Promotes chlorophyll degradation in leaves by enhancing transcription of AAO3, which leads to increased levels of the senescence-inducing hormone abscisic acid (ABA). Involved in the control of dehydration in senescing leaves. Binds to the DNA sequence 5'-CACGTAAGT-3' of SAG113 promoter. SAG113 acts as a negative regulator of ABA signaling for stomatal closure in leaves, and controls water loss during leaf senescence. Transcription factor of the NAC family involved in senescence. May function in the transition between active cell division and cell expansion. Required for normal seed development and morphology. This is NAC transcription factor 29 (NAC029) from Arabidopsis thaliana (Mouse-ear cress).